Here is a 467-residue protein sequence, read N- to C-terminus: MSKGTLFDKVWDLHTVKVLPSGQTQLFIGLHLIHEVTSPQAFAMLRDRNLQVMYPERTVATVDHIVPTENQARPFADPLAEAMMQELEKNTATNKIRFYNVGSGGQGIVHVIAPEQGLTQPGMTVACGDSHTSTHGAFGAIAFGIGTSQVRDVLASQTLALAKLKVRKIEVNGDLQPGVYAKDVILHIIRKLGVKGGVGYAYEYAGTTFEKMSMEERMTVCNMSIEGGARCGYVNPDSVTYDYLKDRPFAPKGEAWEKAIAWWDSLRSEADAEYDDVVTFDAADIAPTVTWGITPGQGIGVDESVPTPEMMAEDEQAIAAEAYKYMQLQPGQAIQGTKIDVCFIGSCTNGRLSDLQEAAKYAKGHHVAPGVKAFVVPGSEQVKQQAEAEGLDRIFTEAGFEWREPGCSMCLAMNPDKLEGNQISASSSNRNFKGRQGSATGRTLLMSPAMVVAAAVTGQVTDVRTLN.

Residues cysteine 347, cysteine 407, and cysteine 410 each coordinate [4Fe-4S] cluster.

This sequence belongs to the aconitase/IPM isomerase family. LeuC type 1 subfamily. In terms of assembly, heterodimer of LeuC and LeuD. The cofactor is [4Fe-4S] cluster.

The enzyme catalyses (2R,3S)-3-isopropylmalate = (2S)-2-isopropylmalate. It functions in the pathway amino-acid biosynthesis; L-leucine biosynthesis; L-leucine from 3-methyl-2-oxobutanoate: step 2/4. Catalyzes the isomerization between 2-isopropylmalate and 3-isopropylmalate, via the formation of 2-isopropylmaleate. The chain is 3-isopropylmalate dehydratase large subunit from Picosynechococcus sp. (strain ATCC 27264 / PCC 7002 / PR-6) (Agmenellum quadruplicatum).